Here is a 330-residue protein sequence, read N- to C-terminus: Phosphate acyltransferase (330 aa).

It belongs to the PlsX family. In terms of assembly, homodimer. Probably interacts with PlsY.

It is found in the cytoplasm. It carries out the reaction a fatty acyl-[ACP] + phosphate = an acyl phosphate + holo-[ACP]. Its pathway is lipid metabolism; phospholipid metabolism. Its function is as follows. Catalyzes the reversible formation of acyl-phosphate (acyl-PO(4)) from acyl-[acyl-carrier-protein] (acyl-ACP). This enzyme utilizes acyl-ACP as fatty acyl donor, but not acyl-CoA. The polypeptide is Phosphate acyltransferase (Bacillus cytotoxicus (strain DSM 22905 / CIP 110041 / 391-98 / NVH 391-98)).